Consider the following 468-residue polypeptide: Putative ankyrin repeat protein R873 (468 aa).

ANK repeat units lie at residues 38–68 (IKTDIIEYIVDNNLLDVLKYFVVLKNLKHNL), 78–107 (SLNENLVKNCEKGNIEIIKYLLDIGADIEG), 109–137 (DNCAVLTASHHGHIEVVKYLVCKGANFRA), 138–167 (NNDKAVRWASDKGHLDVVKYLVSQGSDIRS), 169–197 (NDCSICWASGNGHLEMVKYLVSQGVNIRT), 198–227 (NDDWAIRLASENGHLEVVKYLVSQGADIRS), 229–257 (DDHAIKWASGNGHLEMVKYLVSQSSNIIA), 258–287 (EDNYAVRWASENGHLEVIKYLVSQGSNITS), 289–316 (YYTIIAASKNGHIDIVKYLVSQGVNIRD), 317–346 (CDSSAVQIASENGHLEVVKYLVSQGIDFRE), 348–376 (DDLTFDMALRKGHVEIVKYLVGQGVDFRV), 378–406 (DDYPVRMASHCGRLGVVKYFVSQGADVRA), 407–436 (EDDYAVRMSAEKGHIEVVKFLVDNGANIRA), and 438–466 (NDYAVRLASENGHIKIVEYLVSMGAVLNK).

The sequence is that of Putative ankyrin repeat protein R873 from Acanthamoeba polyphaga mimivirus (APMV).